The primary structure comprises 217 residues: MQFSSAARTVDENVDYLFKVILIGDSNVGKTCVVQHFKSGVYSESQQNTIGVDFTVRSLEIDGKKVKMQVWDTAGQERFRTITQSYYRSAHAAIIAYDLTRRSTFESVPHWIHEIEKYGAANLVIMLIGNKSDLWEKRHVLFEDACTLAEKYGLLAVLETSAKESRNIDEVFVLMAKELIARNSLHLYGESAQQGLPQDSSPVLVAHVPSERTHCTC.

GTP contacts are provided by S26, V28, G29, K30, T31, C32, Y42, S43, E44, S45, and T49. Position 31 (T31) interacts with Mg(2+). Residues 39-54 carry the Switch 1 motif; that stretch reads SGVYSESQQNTIGVDF. Positions 49 and 72 each coordinate Mg(2+). Positions 74 to 89 match the Switch 2 motif; it reads AGQERFRTITQSYYRS. 7 residues coordinate GTP: G75, N130, K131, D133, S161, A162, and K163. Residues C215 and C217 are each lipidated (S-geranylgeranyl cysteine). At C217 the chain carries Cysteine methyl ester.

Belongs to the small GTPase superfamily. Rab family. It depends on Mg(2+) as a cofactor.

Its subcellular location is the cell membrane. It carries out the reaction GTP + H2O = GDP + phosphate + H(+). Regulated by guanine nucleotide exchange factors (GEFs) which promote the exchange of bound GDP for free GTP. Regulated by GTPase activating proteins (GAPs) which increase the GTP hydrolysis activity. Inhibited by GDP dissociation inhibitors (GDIs). The small GTPases Rab are key regulators of intracellular membrane trafficking, from the formation of transport vesicles to their fusion with membranes. Rabs cycle between an inactive GDP-bound form and an active GTP-bound form that is able to recruit to membranes different set of downstream effectors directly responsible for vesicle formation, movement, tethering and fusion. This chain is Ras-related protein Rab-19, found in Rattus norvegicus (Rat).